The sequence spans 325 residues: GMP reductase (325 aa).

Cys174 serves as the catalytic Thioimidate intermediate. NADP(+) is bound at residue Ile203 to Cys226.

It belongs to the IMPDH/GMPR family. GuaC type 2 subfamily.

It catalyses the reaction IMP + NH4(+) + NADP(+) = GMP + NADPH + 2 H(+). Its function is as follows. Catalyzes the irreversible NADPH-dependent deamination of GMP to IMP. It functions in the conversion of nucleobase, nucleoside and nucleotide derivatives of G to A nucleotides, and in maintaining the intracellular balance of A and G nucleotides. This Ligilactobacillus salivarius (strain UCC118) (Lactobacillus salivarius) protein is GMP reductase.